Here is a 401-residue protein sequence, read N- to C-terminus: Enoyl-[acyl-carrier-protein] reductase [NADH] (401 aa).

Residues 48–53 (GASSGY), 74–75 (FE), 111–112 (DA), and 140–141 (LA) each bind NAD(+). A substrate-binding site is contributed by Tyr-226. Catalysis depends on Tyr-236, which acts as the Proton donor. NAD(+)-binding positions include Lys-245 and 274–276 (VVT).

Belongs to the TER reductase family. As to quaternary structure, monomer.

The enzyme catalyses a 2,3-saturated acyl-[ACP] + NAD(+) = a (2E)-enoyl-[ACP] + NADH + H(+). It functions in the pathway lipid metabolism; fatty acid biosynthesis. In terms of biological role, involved in the final reduction of the elongation cycle of fatty acid synthesis (FAS II). Catalyzes the reduction of a carbon-carbon double bond in an enoyl moiety that is covalently linked to an acyl carrier protein (ACP). This chain is Enoyl-[acyl-carrier-protein] reductase [NADH], found in Xylella fastidiosa (strain Temecula1 / ATCC 700964).